Here is a 242-residue protein sequence, read N- to C-terminus: Glucosamine-6-phosphate deaminase (242 aa).

Residue Asp67 is the Proton acceptor; for enolization step of the active site. Catalysis depends on Asn136, which acts as the For ring-opening step. His138 serves as the catalytic Proton acceptor; for ring-opening step. Glu143 serves as the catalytic For ring-opening step.

Belongs to the glucosamine/galactosamine-6-phosphate isomerase family. NagB subfamily.

The catalysed reaction is alpha-D-glucosamine 6-phosphate + H2O = beta-D-fructose 6-phosphate + NH4(+). It functions in the pathway amino-sugar metabolism; N-acetylneuraminate degradation; D-fructose 6-phosphate from N-acetylneuraminate: step 5/5. Catalyzes the reversible isomerization-deamination of glucosamine 6-phosphate (GlcN6P) to form fructose 6-phosphate (Fru6P) and ammonium ion. The chain is Glucosamine-6-phosphate deaminase from Alkaliphilus metalliredigens (strain QYMF).